Here is a 360-residue protein sequence, read N- to C-terminus: Popeye domain-containing protein 1 (360 aa).

At 1 to 48 the chain is on the extracellular side; sequence MNYTESSPLRESTAIGFTPELESIIPVPSNKTTCENWREIHHLVFHVA. Asn-2 and Asn-30 each carry an N-linked (GlcNAc...) asparagine glycan. Residues 49-69 form a helical membrane-spanning segment; the sequence is NICFAVGLVIPTTLHLHMIFL. Residue Arg-70 is a topological domain, cytoplasmic. Residues 71–91 traverse the membrane as a helical segment; that stretch reads GMLTLGCTLYIVWATLYRCAL. Position 92 (Asp-92) is a topological domain, extracellular. A helical transmembrane segment spans residues 93–113; it reads IMIWNSVFLGVNILHLSYLLY. Positions 93 to 115 are required for interaction with CAV3; sequence IMIWNSVFLGVNILHLSYLLYKK. At 114–360 the chain is on the cytoplasmic side; that stretch reads KKRPVKIEKE…PNTLKVHQLP (247 aa). Residues 136–186 form a required for interaction with KCNK2 region; that stretch reads RVPPDLFRRLTGQFCMIQTLKKGQTYAAEDKTSVDDRLSILLKGKMKVSYR. Phosphoserine occurs at positions 295 and 318. The segment at 317–360 is disordered; that stretch reads SSLHVSSPHQRASAKMKPIEEGAEDDDDVFEPASPNTLKVHQLP. Positions 337–346 are enriched in acidic residues; that stretch reads EGAEDDDDVF. Polar residues predominate over residues 350 to 360; it reads SPNTLKVHQLP.

The protein belongs to the popeye family. In terms of assembly, homodimer. Homodimerization requires the C-terminus cytoplasmic region. Interacts (via the C-terminus cytoplasmic tail) with TJP1. Interacts (via the C-terminus cytoplasmic tail) with ARHGEF25/GEFT (via the DH domain). Interacts (via the C-terminus cytoplasmic tail) with VAMP3. Interacts with KCNK2; the interaction enhances KCNK2 surface expression and is inhibited by cAMP. Interacts with CAV3. As to expression, expressed in epithelial cells (at protein level). Expressed in fetal and adult heart and skeletal muscle.

The protein resides in the lateral cell membrane. The protein localises to the cell junction. It is found in the tight junction. Its subcellular location is the membrane. It localises to the cell membrane. The protein resides in the sarcolemma. The protein localises to the caveola. Functionally, cell adhesion molecule involved in the establishment and/or maintenance of cell integrity. Involved in the formation and regulation of the tight junction (TJ) paracellular permeability barrier in epithelial cells. Plays a role in VAMP3-mediated vesicular transport and recycling of different receptor molecules through its interaction with VAMP3. Plays a role in the regulation of cell shape and movement by modulating the Rho-family GTPase activity through its interaction with ARHGEF25/GEFT. Induces primordial adhesive contact and aggregation of epithelial cells in a Ca(2+)-independent manner. Also involved in striated muscle regeneration and repair and in the regulation of cell spreading. Important for the maintenance of cardiac function. Plays a regulatory function in heart rate dynamics mediated, at least in part, through cAMP-binding and, probably, by increasing cell surface expression of the potassium channel KCNK2 and enhancing current density. Is also a caveolae-associated protein important for the preservation of caveolae structural and functional integrity as well as for heart protection against ischemia injury. The chain is Popeye domain-containing protein 1 from Homo sapiens (Human).